The chain runs to 297 residues: Acetaldehyde dehydrogenase (297 aa).

Residue Cys128 is the Acyl-thioester intermediate of the active site. Residues 159–167 (SAGPGTRQN) and Asn272 each bind NAD(+).

This sequence belongs to the acetaldehyde dehydrogenase family.

It catalyses the reaction acetaldehyde + NAD(+) + CoA = acetyl-CoA + NADH + H(+). This chain is Acetaldehyde dehydrogenase, found in Desulfitobacterium hafniense (strain DSM 10664 / DCB-2).